We begin with the raw amino-acid sequence, 282 residues long: PTS system sorbose-specific EIID component (282 aa).

The PTS EIID domain maps to 13–281 (TKITKGDMFK…GIVGYWLGIL (269 aa)). 4 helical membrane-spanning segments follow: residues 135–155 (LGASLALQGSWLGPILFFVAF), 197–217 (GLFIMGILVTKWTTINVPLVV), 234–254 (ILDQFCPGLLALGWTLLCMYL), and 261–281 (PILLIFALFGVGIVGYWLGIL).

It localises to the cell membrane. The phosphoenolpyruvate-dependent sugar phosphotransferase system (PTS), a major carbohydrate active transport system, catalyzes the phosphorylation of incoming sugar substrates concomitant with their translocation across the cell membrane. The enzyme II SorABCD PTS system is involved in L-sorbose transport. The protein is PTS system sorbose-specific EIID component of Lacticaseibacillus casei (Lactobacillus casei).